Consider the following 102-residue polypeptide: Acylphosphatase 1 (102 aa).

Positions 12-100 (TRLVRVRGRV…PRFDRFEQLP (89 aa)) constitute an Acylphosphatase-like domain. Residues arginine 27 and asparagine 45 contribute to the active site.

This sequence belongs to the acylphosphatase family.

It carries out the reaction an acyl phosphate + H2O = a carboxylate + phosphate + H(+). This Ralstonia nicotianae (strain ATCC BAA-1114 / GMI1000) (Ralstonia solanacearum) protein is Acylphosphatase 1 (acyP1).